A 180-amino-acid chain; its full sequence is Beta-lactoglobulin-1 (180 aa).

An N-terminal signal peptide occupies residues 1-18 (MKCLLLALGLALMCGIQA). Disulfide bonds link cysteine 84–cysteine 178 and cysteine 124–cysteine 137.

It belongs to the calycin superfamily. Lipocalin family. Monomer.

It is found in the secreted. Functionally, lactoglobulin is the primary component of whey, it binds retinol and is probably involved in the transport of that molecule. In Equus caballus (Horse), this protein is Beta-lactoglobulin-1 (LGB1).